Consider the following 230-residue polypeptide: Porin OmpL (230 aa).

An N-terminal signal peptide occupies residues 1 to 20; the sequence is MKKINAIILLSSLTSASVFA.

The protein belongs to the oligogalacturonate-specific porin KdgM (TC 1.B.35) family. OmpL subfamily.

It localises to the cell outer membrane. Its function is as follows. Outer membrane channel protein that allows an efficient diffusion of low-molecular-weight solutes such as small sugars and tetraglycine. However, the specific substrate recognized by the OmpL channel is unknown. This Escherichia coli (strain K12) protein is Porin OmpL (ompL).